The chain runs to 721 residues: Glucans biosynthesis glucosyltransferase H (721 aa).

Helical transmembrane passes span 54 to 74 (LIMV…YQVL), 85 to 105 (VVLV…VSAL), 404 to 424 (GIGA…GILI), 458 to 478 (FAGT…LVLI), 493 to 513 (FGGV…MMVF), 548 to 568 (YALP…VSWP), and 569 to 589 (LLLW…VALL).

It belongs to the glycosyltransferase 2 family. OpgH subfamily.

The protein localises to the cell inner membrane. Its pathway is glycan metabolism; osmoregulated periplasmic glucan (OPG) biosynthesis. In terms of biological role, involved in the biosynthesis of osmoregulated periplasmic glucans (OPGs). The sequence is that of Glucans biosynthesis glucosyltransferase H from Rhodopseudomonas palustris (strain TIE-1).